The chain runs to 299 residues: 4-hydroxy-tetrahydrodipicolinate synthase (299 aa).

Threonine 44 lines the pyruvate pocket. The Proton donor/acceptor role is filled by tyrosine 133. The active-site Schiff-base intermediate with substrate is the lysine 162. Pyruvate is bound at residue isoleucine 204.

The protein belongs to the DapA family. Homotetramer; dimer of dimers.

The protein resides in the cytoplasm. It catalyses the reaction L-aspartate 4-semialdehyde + pyruvate = (2S,4S)-4-hydroxy-2,3,4,5-tetrahydrodipicolinate + H2O + H(+). It participates in amino-acid biosynthesis; L-lysine biosynthesis via DAP pathway; (S)-tetrahydrodipicolinate from L-aspartate: step 3/4. Functionally, catalyzes the condensation of (S)-aspartate-beta-semialdehyde [(S)-ASA] and pyruvate to 4-hydroxy-tetrahydrodipicolinate (HTPA). This chain is 4-hydroxy-tetrahydrodipicolinate synthase, found in Thermus thermophilus (strain ATCC 27634 / DSM 579 / HB8).